The sequence spans 421 residues: Replication-associated recombination protein A (421 aa).

Residue 45–52 (GPPGIGKT) coordinates ATP.

It belongs to the AAA ATPase family. RarA/MGS1/WRNIP1 subfamily. As to quaternary structure, homotetramer. Interacts with single-stranded binding protein SsbA. May interact with PriA.

It localises to the cytoplasm. The protein localises to the nucleoid. Its activity is regulated as follows. ssDNA-dependent ATP hydrolysis is stimulated by single-stranded binding protein SsbA but not by SsbB; in the presence of SsbB, ssDNA secondary structure is removed and RarA's ATPase activity is decreased. The C-terminal 9 residues of SsbA are sufficient to stimulate ATPase activity. Functionally, plays a role in recombination-dependent DNA replication. Positively affects the formation of RecA threads during response to DNA damage, directly or indirectly counteracting the negative RecA modulators RecX and RecU. Stabilizes a RecA-ssDNA complex. In vitro, in the presence of SsbA, inhibits PriA-dependent DNA replication restart of both leading and lagging strands; elongation is insensitive to RarA. Plays a role in response to DNA damage, localizes to the replication fork but also to DNA elsewhere in the cell. Probably required for repair of single-stranded nicks generated by H(2)O(2). Epistatic to RecA, partially represses deletions of the error-prone translesion DNA polymerases (dinB1 and dinB2), genetically interacts with replicative helicase loaders dnaB and dnaD. Epistatic to recF and recO mutations upon DNA damage. A DNA-dependent ATPase stimulated by hairpin structures in circular single-stranded (ss)DNA or ssDNA-dsDNA junctions, by blunt end and 5'-tailed dsDNA and by single-stranded binding protein SsbA protein bound to ssDNA. Preferentially binds ssDNA and replication-fork structures; SsbA stimulates binding to ssDNA. Addition of ATP to the protein has no visible effect in vitro. The sequence is that of Replication-associated recombination protein A from Bacillus subtilis (strain 168).